Consider the following 521-residue polypeptide: Signal recognition particle protein (521 aa).

GTP is bound by residues 107 to 114 (GLQGSGKT), 196 to 200 (DTAGR), and 254 to 257 (TKLD). The interval 436-505 (GGMGIPGMGR…MPDGLNELPP (70 aa)) is disordered. Basic residues predominate over residues 447–462 (SATRKSKGGKGKKRAR).

This sequence belongs to the GTP-binding SRP family. SRP54 subfamily. As to quaternary structure, part of the signal recognition particle protein translocation system, which is composed of SRP and FtsY.

The protein resides in the cytoplasm. The catalysed reaction is GTP + H2O = GDP + phosphate + H(+). Its function is as follows. Involved in targeting and insertion of nascent membrane proteins into the cytoplasmic membrane. Binds to the hydrophobic signal sequence of the ribosome-nascent chain (RNC) as it emerges from the ribosomes. The SRP-RNC complex is then targeted to the cytoplasmic membrane where it interacts with the SRP receptor FtsY. In Mycobacterium leprae (strain TN), this protein is Signal recognition particle protein.